Consider the following 104-residue polypeptide: Iron-sulfur cluster assembly protein CyaY (104 aa).

It belongs to the frataxin family.

Its function is as follows. Involved in iron-sulfur (Fe-S) cluster assembly. May act as a regulator of Fe-S biogenesis. The chain is Iron-sulfur cluster assembly protein CyaY from Rickettsia prowazekii (strain Madrid E).